A 295-amino-acid chain; its full sequence is Sulfotransferase 1A1 (295 aa).

48-53 lines the 3'-phosphoadenylyl sulfate pocket; it reads KSGTTW. Substrate is bound at residue 106–108; that stretch reads KTH. Histidine 108 (proton acceptor) is an active-site residue. Residues arginine 130, serine 138, tyrosine 193, 227–232, and 255–259 contribute to the 3'-phosphoadenylyl sulfate site; these read TSFKEM and FMRKG. Serine 138 is subject to Phosphoserine.

It belongs to the sulfotransferase 1 family. In terms of assembly, homodimer. Distal lung parenchyma.

The protein localises to the cytoplasm. It catalyses the reaction a phenol + 3'-phosphoadenylyl sulfate = an aryl sulfate + adenosine 3',5'-bisphosphate + H(+). The enzyme catalyses 17beta-estradiol + 3'-phosphoadenylyl sulfate = 17beta-estradiol 3-sulfate + adenosine 3',5'-bisphosphate + H(+). It carries out the reaction 4-ethylphenol + 3'-phosphoadenylyl sulfate = 4-ethylphenyl sulfate + adenosine 3',5'-bisphosphate + H(+). The catalysed reaction is 4-nitrophenol + 3'-phosphoadenylyl sulfate = 4-nitrophenyl sulfate + adenosine 3',5'-bisphosphate. It catalyses the reaction dopamine + 3'-phosphoadenylyl sulfate = dopamine 3-O-sulfate + adenosine 3',5'-bisphosphate + H(+). The enzyme catalyses dopamine + 3'-phosphoadenylyl sulfate = dopamine 4-O-sulfate + adenosine 3',5'-bisphosphate + H(+). It carries out the reaction 3,3',5-triiodo-L-thyronine + 3'-phosphoadenylyl sulfate = 3,3',5-triiodo-L-thyronine sulfate + adenosine 3',5'-bisphosphate + H(+). The catalysed reaction is 3,3',5'-triiodo-L-thyronine + 3'-phosphoadenylyl sulfate = 3,3',5'-triiodo-L-thyronine sulfate + adenosine 3',5'-bisphosphate + H(+). It catalyses the reaction 3,3'-diiodo-L-thyronine + 3'-phosphoadenylyl sulfate = 3,3'-diiodo-L-thyronine sulfate + adenosine 3',5'-bisphosphate + H(+). The enzyme catalyses L-thyroxine + 3'-phosphoadenylyl sulfate = L-thyroxine sulfate + adenosine 3',5'-bisphosphate + H(+). Functionally, sulfotransferase that utilizes 3'-phospho-5'-adenylyl sulfate (PAPS) as sulfonate donor to catalyze the sulfate conjugation of a wide variety of acceptor molecules bearing a hydroxyl or an amine group. Sulfonation increases the water solubility of most compounds, and therefore their renal excretion, but it can also result in bioactivation to form active metabolites. Displays broad substrate specificity for small phenolic compounds. Plays an important role in the sulfonation of endogenous molecules such as steroid hormones. Mediates also the metabolic activation of carcinogenic N-hydroxyarylamines leading to highly reactive intermediates capable of forming DNA adducts, potentially resulting in mutagenesis. May play a role in gut microbiota-host metabolic interaction. O-sulfonates 4-ethylphenol (4-EP), a dietary tyrosine-derived metabolite produced by gut bacteria. The product 4-EPS crosses the blood-brain barrier and may negatively regulate oligodendrocyte maturation and myelination, affecting the functional connectivity of different brain regions associated with the limbic system. Catalyzes the sulfate conjugation of dopamine. Catalyzes the sulfation of T4 (L-thyroxine/3,5,3',5'-tetraiodothyronine), T3 (3,5,3'-triiodothyronine), rT3 (3,3',5'-triiodothyronine) and 3,3'-T2 (3,3'-diiodothyronine), with a substrate preference of 3,3'-T2 &gt; rT3 &gt; T3 &gt; T4. The protein is Sulfotransferase 1A1 (SULT1A1) of Bos taurus (Bovine).